A 174-amino-acid chain; its full sequence is Cathepsin B-like cysteine proteinase 3 (174 aa).

2 disulfide bridges follow: Cys22–Cys55 and Cys30–Cys42. Catalysis depends on residues His122 and Asn142.

Belongs to the peptidase C1 family.

Its function is as follows. Expression of the protease correlates with blood-feeding and suggests a role for the protease in blood digestion. The protein is Cathepsin B-like cysteine proteinase 3 (CP-3) of Ostertagia ostertagi (Brown stomach worm).